The following is a 37-amino-acid chain: Large ribosomal subunit protein bL36c (37 aa).

This sequence belongs to the bacterial ribosomal protein bL36 family.

The protein resides in the plastid. It localises to the chloroplast. This is Large ribosomal subunit protein bL36c (rpl36) from Chlamydomonas reinhardtii (Chlamydomonas smithii).